Here is a 1043-residue protein sequence, read N- to C-terminus: Glutamate receptor ionotropic, NMDA 3B (1043 aa).

A signal peptide spans 1–22 (MEFVRALWLGLALALGPGSAGG). Topologically, residues 23–574 (HPQPCGVLAR…PIGAFMWPLH (552 aa)) are extracellular. N-linked (GlcNAc...) asparagine glycans are attached at residues asparagine 69, asparagine 344, asparagine 451, and asparagine 465. 2 cysteine pairs are disulfide-bonded: cysteine 439-cysteine 475 and cysteine 445-cysteine 476. The glycine site is built by serine 531, serine 533, and arginine 538. D-serine is bound by residues serine 533 and arginine 538. A helical membrane pass occupies residues 575–594 (WSTWLGVFAALHLTALFLTV). Topologically, residues 595–615 (YEWRSPYGLTPRGRNRSTVFS) are cytoplasmic. An intramembrane region (discontinuously helical) is located at residues 616-627 (YSSALNLCYAIL). The Cytoplasmic portion of the chain corresponds to 628–641 (FRRTVSSKTPKCPT). Residues 642–661 (GRLLMNLWAIFCLLVLSSYT) traverse the membrane as a helical segment. The Extracellular segment spans residues 662-832 (ANLAAVMVGD…TLQMSIYHFA (171 aa)). Serine 701 is a glycine binding site. D-serine is bound by residues serine 701, alanine 702, and aspartate 745. Position 745 (aspartate 745) interacts with glycine. The N-linked (GlcNAc...) asparagine glycan is linked to asparagine 786. A helical transmembrane segment spans residues 833–848 (GLFVLLCLGLGSALLS). The Cytoplasmic segment spans residues 849-1043 (SLGEHAFFRL…PHSGRPGSQE (195 aa)). Disordered regions lie at residues 882–924 (ALNT…WKRA) and 1012–1043 (GDSARHRPRRLLQARAAPAEAPPHSGRPGSQE). Positions 979-1012 (QPGELQELERRIEVARERLRQALVRRGQLLAQLG) are involved in the trafficking and surface expression of NMDARs. The span at 1024–1035 (QARAAPAEAPPH) shows a compositional bias: low complexity.

Belongs to the glutamate-gated ion channel (TC 1.A.10.1) family. NR3B/GRIN3B subfamily. In terms of assembly, forms heterotetrameric channels that contain at least two GluN1 subunits and at least a combination of one GluN2 and one GluN3 subunits (in vitro). Forms heterotetrameric channels composed of two GluN1/zeta subunits (GRIN1), and two identical GluN3 subunits (GRIN3A or GRIN3B) (in vitro). Does not form functional homomeric channels.

The protein localises to the cell membrane. The protein resides in the postsynaptic cell membrane. It catalyses the reaction Ca(2+)(in) = Ca(2+)(out). It carries out the reaction Na(+)(in) = Na(+)(out). Functionally, component of a non-conventional N-methyl-D-aspartate (NMDA) receptors (NMDARs) that function as heterotetrameric, ligand-gated cation channels with low calcium permeability and low voltage-dependent block by Mg(2+). Forms glutamatergic receptor complexes with GluN1 and GluN2 subunits which are activated by glycine binding to the GluN1 and GluN3 subunits and L-glutamate binding to GluN2 subunits. Forms excitatory glycinergic receptor complexes with GluN1 alone which are activated by glycine binding to the GluN1 and GluN3 subunits. GluN3B subunit also binds D-serine and, in the absence of glycine, activates glycinergic receptor complexes, but with lower efficacy than glycine. Each GluN3 subunit confers differential attributes to channel properties, including activation, deactivation and desensitization kinetics, pH sensitivity, Ca2(+) permeability, and binding to allosteric modulators. This Homo sapiens (Human) protein is Glutamate receptor ionotropic, NMDA 3B.